The sequence spans 1846 residues: Unconventional myosin-Vb (1846 aa).

The Myosin N-terminal SH3-like domain occupies 8-60 (SRYTRVWIPDPDEVWRSAELTKDYKDGDESLQLRLEDDTILDYPIDVQNNQVP). Residues 21–40 (VWRSAELTKDYKDGDESLQL) are requires for interaction with LIMA1. A Myosin motor domain is found at 69–763 (VGENDLTALS…QVAYLEKLRA (695 aa)). Residue 163–170 (GESGAGKT) participates in ATP binding. A disordered region spans residues 599–629 (VPATNTAKSRSSSKINVRSSRPLMKAPNKEH). The segment covering 607–619 (SRSSSKINVRSSR) has biased composition (low complexity). The tract at residues 641 to 663 (LNLLMETLNATTPHYVRCIKPND) is actin-binding. IQ domains are found at residues 767–788 (REATIMIQKTVRGWLQRVKYRR), 789–813 (LRAATLTLQRFCRGYLARRLTEHLR), 814–837 (RTRAAIVFQKQYRMLKARRAYCRV), 838–861 (RRAAVIIQSYTRGHVCTQKLPPVL), 862–884 (TEHKATIIQKYARGWMARRHFQR), and 885–914 (QRDAAIVIQCAFRRLKARQALKALKIEARS). Coiled coils occupy residues 915–1272 (AEHL…ADQR) and 1334–1450 (LKQV…RHHE). Residues 1088-1122 (RDEQQTPGHRKNPSNQSSLESDSNYPSISTSEIGD) form a disordered region. The span at 1100 to 1120 (PSNQSSLESDSNYPSISTSEI) shows a compositional bias: polar residues. Serine 1444 bears the Phosphoserine mark. A Dilute domain is found at 1524 to 1801 (SSTINGIKKV…IRTIQAQLQE (278 aa)).

It belongs to the TRAFAC class myosin-kinesin ATPase superfamily. Myosin family. Component of the CART complex, at least composed of ACTN4, HGS/HRS, MYO5B and TRIM3. Interacts with RAB11FIP2. Interacts with RAB11A and RAB8A. Found in a complex with CFTR and RAB11A. Interacts with NPC1L1. Interacts with LIMA1.

The protein resides in the cytoplasm. May be involved in vesicular trafficking via its association with the CART complex. The CART complex is necessary for efficient transferrin receptor recycling but not for EGFR degradation. Required in a complex with RAB11A and RAB11FIP2 for the transport of NPC1L1 to the plasma membrane. Together with RAB11A participates in CFTR trafficking to the plasma membrane and TF (transferrin) recycling in nonpolarized cells. Together with RAB11A and RAB8A participates in epithelial cell polarization. Together with RAB25 regulates transcytosis. Required for proper localization of bile salt export pump ABCB11 at the apical/canalicular plasma membrane of hepatocytes. In Rattus norvegicus (Rat), this protein is Unconventional myosin-Vb (Myo5b).